Reading from the N-terminus, the 275-residue chain is Spermidine/putrescine transport system permease protein PotB (275 aa).

The helical transmembrane segment at 1–21 (MIVTIVGWLVLFVFLPNLMII) threads the bilayer. Over 22-60 (GTSFLTRDDASFVKMVFTLDNYTRLLDPLYFEVLLHSLN) the chain is Periplasmic. Residues 55-261 (LLHSLNMALI…IVMGLMLLVY (207 aa)) enclose the ABC transmembrane type-1 domain. Residues 61 to 81 (MALIATLACLVLGYPFAWFLA) form a helical membrane-spanning segment. Over 82–89 (KLPHKVRP) the chain is Cytoplasmic. The chain crosses the membrane as a helical span at residues 90 to 110 (LLLFLLIVPFWTNSLIRIYGL). At 111–135 (KIFLSTKGYLNEFLLWLGVIDTPIR) the chain is on the periplasmic side. A helical membrane pass occupies residues 136-156 (IMFTPSAVIIGLVYILLPFMV). Topologically, residues 157-187 (MPLYSSIEKLDKPLLEAARDLGASKLQTFIR) are cytoplasmic. The chain crosses the membrane as a helical span at residues 188–208 (IIIPLTMPGIIAGCLLVMLPA). Over 209 to 241 (MGLFYVSDLMGGAKNLLIGNVIKVQFLNIRDWP) the chain is Periplasmic. A helical membrane pass occupies residues 242–262 (FGAATSITLTIVMGLMLLVYW). Topologically, residues 263–275 (RASRLLNKKVELE) are cytoplasmic.

The protein belongs to the binding-protein-dependent transport system permease family. CysTW subfamily.

Its subcellular location is the cell inner membrane. Functionally, required for the activity of the bacterial periplasmic transport system of putrescine and spermidine. This is Spermidine/putrescine transport system permease protein PotB (potB) from Escherichia coli (strain K12).